The following is a 251-amino-acid chain: Small ribosomal subunit protein uS3 (251 aa).

Residues 39–109 (IRNYVQARLK…EVKIDVIEVI (71 aa)) form the KH type-2 domain. Basic and acidic residues predominate over residues 222 to 239 (LKKIKDRRGEQRSRGRDS). A disordered region spans residues 222–251 (LKKIKDRRGEQRSRGRDSRNRRRRKPRQTT). The segment covering 240–251 (RNRRRRKPRQTT) has biased composition (basic residues).

The protein belongs to the universal ribosomal protein uS3 family. In terms of assembly, part of the 30S ribosomal subunit. Forms a tight complex with proteins S10 and S14.

Binds the lower part of the 30S subunit head. Binds mRNA in the 70S ribosome, positioning it for translation. The polypeptide is Small ribosomal subunit protein uS3 (Prosthecochloris aestuarii (strain DSM 271 / SK 413)).